Here is a 118-residue protein sequence, read N- to C-terminus: Probable small nuclear ribonucleoprotein Sm D2 (118 aa).

The 87-residue stretch at 29–115 (LSILTNSVKN…VILVVKNPLA (87 aa)) folds into the Sm domain.

It belongs to the snRNP core protein family.

Its subcellular location is the nucleus. The protein localises to the cytoplasm. It localises to the cytosol. Its function is as follows. Plays a role in pre-mRNA splicing as a core component of the spliceosomal U1, U2, U4 and U5 small nuclear ribonucleoproteins (snRNPs), the building blocks of the spliceosome. The sequence is that of Probable small nuclear ribonucleoprotein Sm D2 (snr-4) from Caenorhabditis elegans.